We begin with the raw amino-acid sequence, 61 residues long: Metallothionein-1A (61 aa).

At Met-1 the chain carries N-acetylmethionine. The segment at 1–29 is beta; sequence MDPNCSCPTGGSCSCAGSCTCKACRCTSC. A divalent metal cation contacts are provided by Cys-5, Cys-7, Cys-13, Cys-15, Cys-19, Cys-21, Cys-24, Cys-26, Cys-29, Cys-33, Cys-34, Cys-36, Cys-37, Cys-41, Cys-44, Cys-48, Cys-50, and Cys-57. An alpha region spans residues 30-61; that stretch reads KKSCCSCCPAGCARCAQGCICKGASDKCSCCA. Ser-58 carries the post-translational modification Phosphoserine. The a divalent metal cation site is built by Cys-59 and Cys-60.

The protein belongs to the metallothionein superfamily. Type 1 family. As to quaternary structure, monomer.

Functionally, metallothioneins have a high content of cysteine residues that bind various heavy metals; these proteins are transcriptionally regulated by both heavy metals and glucocorticoids. The protein is Metallothionein-1A (MT1A) of Sus scrofa (Pig).